A 223-amino-acid chain; its full sequence is Deoxyribose-phosphate aldolase (223 aa).

Catalysis depends on Asp89, which acts as the Proton donor/acceptor. The active-site Schiff-base intermediate with acetaldehyde is the Lys152. Lys181 acts as the Proton donor/acceptor in catalysis.

The protein belongs to the DeoC/FbaB aldolase family. DeoC type 1 subfamily.

It is found in the cytoplasm. It carries out the reaction 2-deoxy-D-ribose 5-phosphate = D-glyceraldehyde 3-phosphate + acetaldehyde. It participates in carbohydrate degradation; 2-deoxy-D-ribose 1-phosphate degradation; D-glyceraldehyde 3-phosphate and acetaldehyde from 2-deoxy-alpha-D-ribose 1-phosphate: step 2/2. Its function is as follows. Catalyzes a reversible aldol reaction between acetaldehyde and D-glyceraldehyde 3-phosphate to generate 2-deoxy-D-ribose 5-phosphate. The polypeptide is Deoxyribose-phosphate aldolase (Listeria monocytogenes serovar 1/2a (strain ATCC BAA-679 / EGD-e)).